The primary structure comprises 411 residues: Lissencephaly-1 homolog (411 aa).

The LisH domain occupies 9-41; the sequence is QREELNQAIADYLGSNGYGDSLETFRKEADVST. Residues 56 to 83 are a coiled coil; the sequence is TSVIRLQKKVMELEAKLTEAEKEVIEGA. WD repeat units lie at residues 106 to 147, 148 to 187, 191 to 230, 233 to 272, 275 to 334, 337 to 376, and 379 to 411; these read GHRA…RSLK, GHTD…ECVK, GHDH…CVKT, GHRE…CKVE, DHEH…CLLT, GHDN…CMKT, and AHQH…WECR.

Belongs to the WD repeat LIS1/nudF family.

It is found in the cytoplasm. The protein localises to the cytoskeleton. It localises to the microtubule organizing center. The protein resides in the centrosome. Its function is as follows. Positively regulates the activity of the minus-end directed microtubule motor protein dynein. May enhance dynein-mediated microtubule sliding by targeting dynein to the microtubule plus end. Required for several dynein- and microtubule-dependent processes. This chain is Lissencephaly-1 homolog, found in Drosophila persimilis (Fruit fly).